Consider the following 208-residue polypeptide: Large ribosomal subunit protein bL25 (208 aa).

The tract at residues 163 to 208 (DYSYNHEPDEVVASILPPQKQEETEAESAAQDVEEPEKGTEEEKEE) is disordered. Positions 198–208 (PEKGTEEEKEE) are enriched in basic and acidic residues.

Belongs to the bacterial ribosomal protein bL25 family. CTC subfamily. In terms of assembly, part of the 50S ribosomal subunit; part of the 5S rRNA/L5/L18/L25 subcomplex. Contacts the 5S rRNA. Binds to the 5S rRNA independently of L5 and L18.

This is one of the proteins that binds to the 5S RNA in the ribosome where it forms part of the central protuberance. This Bacillus licheniformis (strain ATCC 14580 / DSM 13 / JCM 2505 / CCUG 7422 / NBRC 12200 / NCIMB 9375 / NCTC 10341 / NRRL NRS-1264 / Gibson 46) protein is Large ribosomal subunit protein bL25.